The sequence spans 337 residues: Holliday junction branch migration complex subunit RuvB (337 aa).

The large ATPase domain (RuvB-L) stretch occupies residues 4 to 184; it reads QDRIISAELK…FGIVQRLEFY (181 aa). ATP contacts are provided by residues isoleucine 23, arginine 24, glycine 65, lysine 68, threonine 69, threonine 70, 131 to 133, arginine 174, tyrosine 184, and arginine 221; that span reads EDY. Threonine 69 serves as a coordination point for Mg(2+). Residues 185–255 are small ATPAse domain (RuvB-S); the sequence is DVESLTTIVA…VAQRALDMLS (71 aa). The head domain (RuvB-H) stretch occupies residues 258–337; sequence SQGFDHLDRR…FNYQLPSDFK (80 aa). Positions 313 and 318 each coordinate DNA.

Belongs to the RuvB family. In terms of assembly, homohexamer. Forms an RuvA(8)-RuvB(12)-Holliday junction (HJ) complex. HJ DNA is sandwiched between 2 RuvA tetramers; dsDNA enters through RuvA and exits via RuvB. An RuvB hexamer assembles on each DNA strand where it exits the tetramer. Each RuvB hexamer is contacted by two RuvA subunits (via domain III) on 2 adjacent RuvB subunits; this complex drives branch migration. In the full resolvosome a probable DNA-RuvA(4)-RuvB(12)-RuvC(2) complex forms which resolves the HJ.

The protein localises to the cytoplasm. The enzyme catalyses ATP + H2O = ADP + phosphate + H(+). Its function is as follows. The RuvA-RuvB-RuvC complex processes Holliday junction (HJ) DNA during genetic recombination and DNA repair, while the RuvA-RuvB complex plays an important role in the rescue of blocked DNA replication forks via replication fork reversal (RFR). RuvA specifically binds to HJ cruciform DNA, conferring on it an open structure. The RuvB hexamer acts as an ATP-dependent pump, pulling dsDNA into and through the RuvAB complex. RuvB forms 2 homohexamers on either side of HJ DNA bound by 1 or 2 RuvA tetramers; 4 subunits per hexamer contact DNA at a time. Coordinated motions by a converter formed by DNA-disengaged RuvB subunits stimulates ATP hydrolysis and nucleotide exchange. Immobilization of the converter enables RuvB to convert the ATP-contained energy into a lever motion, pulling 2 nucleotides of DNA out of the RuvA tetramer per ATP hydrolyzed, thus driving DNA branch migration. The RuvB motors rotate together with the DNA substrate, which together with the progressing nucleotide cycle form the mechanistic basis for DNA recombination by continuous HJ branch migration. Branch migration allows RuvC to scan DNA until it finds its consensus sequence, where it cleaves and resolves cruciform DNA. The polypeptide is Holliday junction branch migration complex subunit RuvB (Marinomonas sp. (strain MWYL1)).